A 638-amino-acid polypeptide reads, in one-letter code: Threonine--tRNA ligase (638 aa).

The region spanning Met1–Thr63 is the TGS domain. The tract at residues Asp245–Pro536 is catalytic. Zn(2+) contacts are provided by Cys337, His388, and His513.

Belongs to the class-II aminoacyl-tRNA synthetase family. In terms of assembly, homodimer. Zn(2+) serves as cofactor.

The protein resides in the cytoplasm. The enzyme catalyses tRNA(Thr) + L-threonine + ATP = L-threonyl-tRNA(Thr) + AMP + diphosphate + H(+). Catalyzes the attachment of threonine to tRNA(Thr) in a two-step reaction: L-threonine is first activated by ATP to form Thr-AMP and then transferred to the acceptor end of tRNA(Thr). Also edits incorrectly charged L-seryl-tRNA(Thr). In Syntrophotalea carbinolica (strain DSM 2380 / NBRC 103641 / GraBd1) (Pelobacter carbinolicus), this protein is Threonine--tRNA ligase.